The sequence spans 609 residues: Threonine--tRNA ligase (609 aa).

Residues 1 to 143 (MRVLYLHTER…SFKPGDSRAE (143 aa)) are editing domain. Catalytic stretches follow at residues 195–491 (PRYL…PRLP) and 196–491 (RYLE…PRLP). Zn(2+) is bound by residues cysteine 288, histidine 339, and histidine 460.

It belongs to the class-II aminoacyl-tRNA synthetase family. As to quaternary structure, homodimer. Requires Zn(2+) as cofactor.

The protein localises to the cytoplasm. It catalyses the reaction tRNA(Thr) + L-threonine + ATP = L-threonyl-tRNA(Thr) + AMP + diphosphate + H(+). Functionally, catalyzes the attachment of threonine to tRNA(Thr) in a two-step reaction: L-threonine is first activated by ATP to form Thr-AMP and then transferred to the acceptor end of tRNA(Thr). Also edits incorrectly charged L-seryl-tRNA(Thr). This chain is Threonine--tRNA ligase, found in Pyrobaculum neutrophilum (strain DSM 2338 / JCM 9278 / NBRC 100436 / V24Sta) (Thermoproteus neutrophilus).